Consider the following 286-residue polypeptide: Glycine--tRNA ligase alpha subunit (286 aa).

The protein belongs to the class-II aminoacyl-tRNA synthetase family. Tetramer of two alpha and two beta subunits.

It localises to the cytoplasm. It carries out the reaction tRNA(Gly) + glycine + ATP = glycyl-tRNA(Gly) + AMP + diphosphate. This is Glycine--tRNA ligase alpha subunit from Thermotoga petrophila (strain ATCC BAA-488 / DSM 13995 / JCM 10881 / RKU-1).